Consider the following 449-residue polypeptide: Heterogeneous nuclear ribonucleoprotein H (449 aa).

At Met1 the chain carries N-acetylmethionine; in Heterogeneous nuclear ribonucleoprotein H; alternate. N-acetylmethionine; in Heterogeneous nuclear ribonucleoprotein H, N-terminally processed is present on Met2. One can recognise an RRM 1 domain in the interval 11–90 (FVVKVRGLPW…RYVEVFKSNN (80 aa)). Ser23 carries the post-translational modification Phosphoserine. Lys35 participates in a covalent cross-link: Glycyl lysine isopeptide (Lys-Gly) (interchain with G-Cter in SUMO2). Phosphoserine occurs at positions 54 and 63. Residues Lys87 and Lys98 each participate in a glycyl lysine isopeptide (Lys-Gly) (interchain with G-Cter in SUMO2) cross-link. Positions 111 to 188 (GFVRLRGLPF…RYIEIFKSSR (78 aa)) constitute an RRM 2 domain. Arg233 is modified (dimethylated arginine; alternate). Arg233 carries the omega-N-methylarginine; alternate modification. One copy of the 1-1 repeat lies at 234 to 249 (GAYGGGYGGYDDYNGY). The interval 234-433 (GAYGGGYGGY…YGGQSSMSGY (200 aa)) is 2 X 16 AA Gly-rich approximate repeats. Position 246 is a phosphotyrosine (Tyr246). Positions 289–364 (HCVHMRGLPY…RYVELFLNST (76 aa)) constitute an RRM 3 domain. Phosphoserine is present on Ser310. 3 repeat units span residues 354-372 (HRYV…GGAY), 374-392 (HRYV…GGAY), and 418-433 (GGYG…MSGY). Residues 354-392 (HRYVELFLNSTAGASGGAYEHRYVELFLNSTAGASGGAY) are 2 X 19 AA perfect repeats.

Part of a ternary complex containing FUBP2, PTBP1, PTBP2 and HNRNPH1. Identified in the spliceosome C complex. Interacts with IGF2BP1. Interacts with CUGBP1; the interaction is RNA-dependent. Interacts with MBNL1; the interaction in RNA-independent. In terms of tissue distribution, expressed ubiquitously.

The protein localises to the nucleus. It localises to the nucleoplasm. In terms of biological role, this protein is a component of the heterogeneous nuclear ribonucleoprotein (hnRNP) complexes which provide the substrate for the processing events that pre-mRNAs undergo before becoming functional, translatable mRNAs in the cytoplasm. Mediates pre-mRNA alternative splicing regulation. Inhibits, together with CUGBP1, insulin receptor (IR) pre-mRNA exon 11 inclusion in myoblast. Binds to the IR RNA. Binds poly(RG). This Homo sapiens (Human) protein is Heterogeneous nuclear ribonucleoprotein H (HNRNPH1).